Here is a 616-residue protein sequence, read N- to C-terminus: Chaperone protein HscA (616 aa).

The protein belongs to the heat shock protein 70 family.

Chaperone involved in the maturation of iron-sulfur cluster-containing proteins. Has a low intrinsic ATPase activity which is markedly stimulated by HscB. Involved in the maturation of IscU. The chain is Chaperone protein HscA from Salmonella typhimurium (strain LT2 / SGSC1412 / ATCC 700720).